Reading from the N-terminus, the 301-residue chain is tRNA dimethylallyltransferase (301 aa).

Glycine 8–threonine 15 provides a ligand contact to ATP. A substrate-binding site is contributed by threonine 10–threonine 15. The interaction with substrate tRNA stretch occupies residues aspartate 33 to glutamine 36.

Belongs to the IPP transferase family. As to quaternary structure, monomer. The cofactor is Mg(2+).

The catalysed reaction is adenosine(37) in tRNA + dimethylallyl diphosphate = N(6)-dimethylallyladenosine(37) in tRNA + diphosphate. Catalyzes the transfer of a dimethylallyl group onto the adenine at position 37 in tRNAs that read codons beginning with uridine, leading to the formation of N6-(dimethylallyl)adenosine (i(6)A). The sequence is that of tRNA dimethylallyltransferase from Thermosipho melanesiensis (strain DSM 12029 / CIP 104789 / BI429).